The sequence spans 892 residues: Alpha-actinin-1 (892 aa).

Met-1 carries the N-acetylmethionine modification. Positions 1–247 (MDHYDSQQTN…IMTYVSSFYH (247 aa)) are actin-binding. Phosphoserine is present on Ser-6. Tyr-12 is modified (phosphotyrosine; by FAK1). 2 Calponin-homology (CH) domains span residues 31–135 (KQQR…LRFA) and 144–250 (TSAK…HAFS). An N6-acetyllysine mark is found at Lys-95 and Lys-195. 4 Spectrin repeats span residues 274–384 (QLME…WLLN), 394–499 (HLAE…ALER), 509–620 (QLYL…ALTE), and 630–733 (RLRK…EVEN). Residues 274–733 (QLMEDYEKLA…IARTINEVEN (460 aa)) are interaction with DDN. Ser-471 carries the phosphoserine modification. Lys-676 carries the N6-acetyllysine modification. Ser-677 bears the Phosphoserine mark. 2 EF-hand domains span residues 746-781 (EQMN…LGYD) and 787-822 (QGEA…ETAD). Ca(2+) is bound by residues Asp-759, Asp-761, Ser-763, Thr-765, and Glu-770. Ser-890 carries the post-translational modification Phosphoserine.

The protein belongs to the alpha-actinin family. In terms of assembly, homodimer; antiparallel. Interacts with MYOZ2, TTID and LPP. Interacts with DDN. Interacts with PSD. Interacts with MICALL2. Interacts with DNM2 and CTTN. Interacts with PDLIM1. Interacts with PDLIM2. Interacts with PDLIM4 (via PDZ domain). Interacts with IGSF8.

The protein resides in the cytoplasm. It localises to the cytoskeleton. It is found in the myofibril. Its subcellular location is the sarcomere. The protein localises to the z line. The protein resides in the cell membrane. It localises to the cell junction. It is found in the cell projection. Its subcellular location is the ruffle. F-actin cross-linking protein which is thought to anchor actin to a variety of intracellular structures. Association with IGSF8 regulates the immune synapse formation and is required for efficient T-cell activation. The chain is Alpha-actinin-1 (ACTN1) from Macaca fascicularis (Crab-eating macaque).